Here is a 487-residue protein sequence, read N- to C-terminus: Betaine aldehyde dehydrogenase (487 aa).

Isoleucine 27 and aspartate 93 together coordinate K(+). Glycine 149 to tryptophan 151 serves as a coordination point for NAD(+). Catalysis depends on lysine 161, which acts as the Charge relay system. Residues lysine 175–glutamate 178 and serine 228–threonine 231 each bind NAD(+). Residue leucine 243 coordinates K(+). Glutamate 249 functions as the Proton acceptor in the catalytic mechanism. Glycine 251, cysteine 283, and glutamate 384 together coordinate NAD(+). Cysteine 283 acts as the Nucleophile in catalysis. Residue cysteine 283 is modified to Cysteine sulfenic acid (-SOH). Residues lysine 454 and glycine 457 each contribute to the K(+) site. The active-site Charge relay system is glutamate 461.

Belongs to the aldehyde dehydrogenase family. In terms of assembly, dimer of dimers. Requires K(+) as cofactor.

It carries out the reaction betaine aldehyde + NAD(+) + H2O = glycine betaine + NADH + 2 H(+). The protein operates within amine and polyamine biosynthesis; betaine biosynthesis via choline pathway; betaine from betaine aldehyde: step 1/1. Involved in the biosynthesis of the osmoprotectant glycine betaine. Catalyzes the irreversible oxidation of betaine aldehyde to the corresponding acid. The polypeptide is Betaine aldehyde dehydrogenase (Brucella abortus (strain S19)).